The chain runs to 23 residues: Nephrotoxin PsTX-115 (23 aa).

Its subcellular location is the secreted. The protein localises to the nematocyst. In terms of biological role, nephrotoxin. When injected intravenously in rats, causes severe destructive glomerular changes. At 24 hours post-injection partial disruption of the glomerular basement membrane, massive thrombus formation in glomerular capillaries, severe mesangiolysis and infiltrating cells were observed in the majority of glomeruli. The polypeptide is Nephrotoxin PsTX-115 (Phyllodiscus semoni (Night anemone)).